A 333-amino-acid chain; its full sequence is Ketol-acid reductoisomerase (NADP(+)) (333 aa).

Residues 2–182 form the KARI N-terminal Rossmann domain; sequence AELFYDADAD…GGTRAGVIKT (181 aa). Residues 25 to 28, Ser51, Ser53, and 83 to 86 contribute to the NADP(+) site; these read YGSQ and DPIQ. The active site involves His108. NADP(+) is bound at residue Gly134. One can recognise a KARI C-terminal knotted domain in the interval 183–328; sequence TFTEETETDL…KELRKLMSWV (146 aa). The Mg(2+) site is built by Asp191, Glu195, Glu227, and Glu231. Ser252 is a binding site for substrate.

The protein belongs to the ketol-acid reductoisomerase family. Requires Mg(2+) as cofactor.

It catalyses the reaction (2R)-2,3-dihydroxy-3-methylbutanoate + NADP(+) = (2S)-2-acetolactate + NADPH + H(+). The enzyme catalyses (2R,3R)-2,3-dihydroxy-3-methylpentanoate + NADP(+) = (S)-2-ethyl-2-hydroxy-3-oxobutanoate + NADPH + H(+). The protein operates within amino-acid biosynthesis; L-isoleucine biosynthesis; L-isoleucine from 2-oxobutanoate: step 2/4. Its pathway is amino-acid biosynthesis; L-valine biosynthesis; L-valine from pyruvate: step 2/4. Its function is as follows. Involved in the biosynthesis of branched-chain amino acids (BCAA). Catalyzes an alkyl-migration followed by a ketol-acid reduction of (S)-2-acetolactate (S2AL) to yield (R)-2,3-dihydroxy-isovalerate. In the isomerase reaction, S2AL is rearranged via a Mg-dependent methyl migration to produce 3-hydroxy-3-methyl-2-ketobutyrate (HMKB). In the reductase reaction, this 2-ketoacid undergoes a metal-dependent reduction by NADPH to yield (R)-2,3-dihydroxy-isovalerate. The chain is Ketol-acid reductoisomerase (NADP(+)) from Streptomyces avermitilis (strain ATCC 31267 / DSM 46492 / JCM 5070 / NBRC 14893 / NCIMB 12804 / NRRL 8165 / MA-4680).